The chain runs to 348 residues: UDP-glucose 4-epimerase (348 aa).

NAD(+) is bound by residues 12 to 14 (GYI), 33 to 37 (DNFHN), 66 to 67 (DI), Phe-88, and Lys-92. 132–134 (SAT) is a substrate binding site. Tyr-157 functions as the Proton acceptor in the catalytic mechanism. NAD(+) contacts are provided by Lys-161 and Tyr-185. Substrate-binding positions include 185–187 (YFN), 206–208 (NNL), 224–226 (NVF), Arg-239, and 300–303 (REGD).

It belongs to the NAD(P)-dependent epimerase/dehydratase family. Homodimer. NAD(+) serves as cofactor.

The enzyme catalyses UDP-alpha-D-glucose = UDP-alpha-D-galactose. It catalyses the reaction UDP-N-acetyl-alpha-D-glucosamine = UDP-N-acetyl-alpha-D-galactosamine. It functions in the pathway carbohydrate metabolism; galactose metabolism. Functionally, catalyzes two distinct but analogous reactions: the reversible epimerization of UDP-glucose to UDP-galactose and the reversible epimerization of UDP-N-acetylglucosamine to UDP-N-acetylgalactosamine. The reaction with UDP-Gal plays a critical role in the Leloir pathway of galactose catabolism in which galactose is converted to the glycolytic intermediate glucose 6-phosphate. It contributes to the catabolism of dietary galactose and enables the endogenous biosynthesis of both UDP-Gal and UDP-GalNAc when exogenous sources are limited. Both UDP-sugar interconversions are important in the synthesis of glycoproteins and glycolipids. This Homo sapiens (Human) protein is UDP-glucose 4-epimerase.